A 463-amino-acid chain; its full sequence is METEQPEETFPNTETNGEFGKRPAEDMEEEQAFKRSRNTDEMVELRILLQSKNAGAVIGKGGKNIKALRTDYNASVSVPDSSGPERILSISADIETIGEILKKIIPTLEEGLQLPSPTATSQLPLESDAVECLNYQHYKGSDFDCELRLLIHQSLAGGIIGVKGAKIKELRENTQTTIKLFQECCPHSTDRVVLIGGKPDRVVECIKIILDLISESPIKGRAQPYDPNFYDETYDYGGFTMMFDDRRGRPVGFPMRGRGGFDRMPPGRGGRPMPPSRRDYDDMSPRRGPPPPPPGRGGRGGSRARNLPLPPPPPPRGGDLMAYDRRGRPGDRYDGMVGFSADETWDSAIDTWSPSEWQMAYEPQGGSGYDYSYAGGRGSYGDLGGPIITTQVTIPKDLAGSIIGKGGQRIKQIRHESGASIKIDEPLEGSEDRIITITGTQDQIQNAQYLLQNSVKQYSGKFF.

Position 1 is an N-acetylmethionine (methionine 1). Residues 1–37 form a disordered region; the sequence is METEQPEETFPNTETNGEFGKRPAEDMEEEQAFKRSR. The interval 1 to 276 is necessary for interaction with DDX1; it reads METEQPEETF…GRGGRPMPPS (276 aa). Residues 19 to 37 show a composition bias toward basic and acidic residues; sequence FGKRPAEDMEEEQAFKRSR. The residue at position 34 (lysine 34) is an N6-acetyllysine; alternate. A Glycyl lysine isopeptide (Lys-Gly) (interchain with G-Cter in SUMO1); alternate cross-link involves residue lysine 34. Residue lysine 34 forms a Glycyl lysine isopeptide (Lys-Gly) (interchain with G-Cter in SUMO2); alternate linkage. Positions 35 to 197 are interaction with ASFV p30; that stretch reads RSRNTDEMVE…STDRVVLIGG (163 aa). Phosphoserine is present on serine 36. The residue at position 39 (threonine 39) is a Phosphothreonine. A KH 1 domain is found at 42–104; that stretch reads MVELRILLQS…ETIGEILKKI (63 aa). Residues lysine 52 and lysine 60 each participate in a glycyl lysine isopeptide (Lys-Gly) (interchain with G-Cter in SUMO2) cross-link. Repeat copies occupy residues 54-76 and 59-62. A 2 X 22 AA approximate repeats region spans residues 54–421; that stretch reads AGAVIGKGGK…QIRHESGASI (368 aa). Residues 59–407 are 5 X 4 AA repeats of G-X-G-G; the sequence is GKGGKNIKAL…LAGSIIGKGG (349 aa). A phosphoserine mark is found at serine 75 and serine 116. Positions 144–209 constitute a KH 2 domain; that stretch reads DCELRLLIHQ…DRVVECIKII (66 aa). Lysine 163 participates in a covalent cross-link: Glycyl lysine isopeptide (Lys-Gly) (interchain with G-Cter in SUMO1); alternate. Lysine 163 is covalently cross-linked (Glycyl lysine isopeptide (Lys-Gly) (interchain with G-Cter in SUMO2); alternate). The residue at position 198 (lysine 198) is an N6-acetyllysine. Residues 209–337 form an interaction with ZIK1 region; it reads ILDLISESPI…RPGDRYDGMV (129 aa). A phosphoserine mark is found at serine 214 and serine 216. Residue lysine 219 forms a Glycyl lysine isopeptide (Lys-Gly) (interchain with G-Cter in SUMO2); alternate linkage. Lysine 219 bears the N6-succinyllysine; alternate mark. Positions 236–273 are RNA-binding RGG-box; the sequence is YGGFTMMFDDRRGRPVGFPMRGRGGFDRMPPGRGGRPM. Tandem repeats lie at residues 245–250, 257–260, and 267–270. A 2 X 6 AA approximate repeats region spans residues 245-329; it reads DRRGRPVGFP…LMAYDRRGRP (85 aa). A disordered region spans residues 250 to 329; that stretch reads PVGFPMRGRG…LMAYDRRGRP (80 aa). A compositionally biased stretch (low complexity) spans 252-266; the sequence is GFPMRGRGGFDRMPP. Residues 276 to 285 are compositionally biased toward basic and acidic residues; that stretch reads SRRDYDDMSP. Serine 284 bears the Phosphoserine mark. Residues 295–298 form a 3-4 repeat; that stretch reads GRGG. Position 316 is an omega-N-methylarginine (arginine 316). A 2-2 repeat occupies 324–329; sequence DRRGRP. The residue at position 377 (arginine 377) is an Omega-N-methylarginine. Position 379 is a phosphoserine (serine 379). Tyrosine 380 carries the post-translational modification Phosphotyrosine. Residues 387-451 enclose the KH 3 domain; that stretch reads IITTQVTIPK…DQIQNAQYLL (65 aa). 2 consecutive repeat copies span residues 399-421 and 404-407. Lysine 405 bears the N6-acetyllysine; alternate mark. Lysine 405 is covalently cross-linked (Glycyl lysine isopeptide (Lys-Gly) (interchain with G-Cter in SUMO2); alternate). Serine 420 carries the phosphoserine modification. Lysine 422 participates in a covalent cross-link: Glycyl lysine isopeptide (Lys-Gly) (interchain with G-Cter in SUMO1); alternate. Residue lysine 422 forms a Glycyl lysine isopeptide (Lys-Gly) (interchain with G-Cter in SUMO2); alternate linkage. Lysine 422 is covalently cross-linked (Glycyl lysine isopeptide (Lys-Gly) (interchain with G-Cter in SUMO); alternate).

Identified in the spliceosome C complex. Part of a transcription inhibitory ribonucleoprotein complex composed at least of the circular RNA circZNF827, ZNF827 and HNRNPL. Interacts with RBM42 and ZIK1. Interacts with BRDT. Interacts with ANKRD28. Interacts with ASFV p30 protein. Interacts with DDX1. Interacts with MDM2; this interaction leads to ubiquitination and proteasomal degradation. Interacts with p53/TP53. Interacts with IVNS1ABP (via BACK domain); the interaction is direct. Interacts with PPIA/CYPA. As to quaternary structure, (Microbial infection) Interacts with HCV core protein. Arg-296 and Arg-299 are dimethylated, probably to asymmetric dimethylarginine. Post-translationally, sumoylated by CBX4. Sumoylation is increased upon DNA damage, such as that produced by doxorubicin, etoposide, UV light and camptothecin, due to enhanced CBX4 phosphorylation by HIPK2 under these conditions. In terms of processing, ubiquitinated by MDM2. Doxorubicin treatment does not affect monoubiquitination, but slightly decreases HNRNPK poly-ubiquitination. O-glycosylated (O-GlcNAcylated), in a cell cycle-dependent manner.

Its subcellular location is the cytoplasm. It localises to the nucleus. The protein resides in the nucleoplasm. The protein localises to the cell projection. It is found in the podosome. Functionally, one of the major pre-mRNA-binding proteins. Binds tenaciously to poly(C) sequences. Likely to play a role in the nuclear metabolism of hnRNAs, particularly for pre-mRNAs that contain cytidine-rich sequences. Can also bind poly(C) single-stranded DNA. Plays an important role in p53/TP53 response to DNA damage, acting at the level of both transcription activation and repression. When sumoylated, acts as a transcriptional coactivator of p53/TP53, playing a role in p21/CDKN1A and 14-3-3 sigma/SFN induction. As far as transcription repression is concerned, acts by interacting with long intergenic RNA p21 (lincRNA-p21), a non-coding RNA induced by p53/TP53. This interaction is necessary for the induction of apoptosis, but not cell cycle arrest. As part of a ribonucleoprotein complex composed at least of ZNF827, HNRNPL and the circular RNA circZNF827 that nucleates the complex on chromatin, may negatively regulate the transcription of genes involved in neuronal differentiation. This Homo sapiens (Human) protein is Heterogeneous nuclear ribonucleoprotein K (HNRNPK).